The primary structure comprises 440 residues: Xylose isomerase (440 aa).

Residues His-100 and Asp-103 contribute to the active site. Positions 231, 267, 270, 295, 306, 308, and 338 each coordinate Mg(2+).

Belongs to the xylose isomerase family. As to quaternary structure, homotetramer. Requires Mg(2+) as cofactor.

The protein resides in the cytoplasm. The catalysed reaction is alpha-D-xylose = alpha-D-xylulofuranose. In Burkholderia vietnamiensis (strain G4 / LMG 22486) (Burkholderia cepacia (strain R1808)), this protein is Xylose isomerase.